A 159-amino-acid chain; its full sequence is Ribosomal RNA large subunit methyltransferase H (159 aa).

S-adenosyl-L-methionine contacts are provided by residues L76, G108, and M127 to F132.

This sequence belongs to the RNA methyltransferase RlmH family. Homodimer.

It is found in the cytoplasm. The enzyme catalyses pseudouridine(1915) in 23S rRNA + S-adenosyl-L-methionine = N(3)-methylpseudouridine(1915) in 23S rRNA + S-adenosyl-L-homocysteine + H(+). In terms of biological role, specifically methylates the pseudouridine at position 1915 (m3Psi1915) in 23S rRNA. The chain is Ribosomal RNA large subunit methyltransferase H from Ureaplasma parvum serovar 3 (strain ATCC 27815 / 27 / NCTC 11736).